Consider the following 391-residue polypeptide: 3-ketoacyl-CoA thiolase (391 aa).

The Acyl-thioester intermediate role is filled by Cys-95. Catalysis depends on proton acceptor residues His-347 and Cys-377.

The protein belongs to the thiolase-like superfamily. Thiolase family. Heterotetramer of two alpha chains (FadB) and two beta chains (FadA).

The protein localises to the cytoplasm. The enzyme catalyses an acyl-CoA + acetyl-CoA = a 3-oxoacyl-CoA + CoA. It functions in the pathway lipid metabolism; fatty acid beta-oxidation. Catalyzes the final step of fatty acid oxidation in which acetyl-CoA is released and the CoA ester of a fatty acid two carbons shorter is formed. The chain is 3-ketoacyl-CoA thiolase from Stutzerimonas stutzeri (strain A1501) (Pseudomonas stutzeri).